A 216-amino-acid chain; its full sequence is Redox-sensing transcriptional repressor Rex (216 aa).

Positions 20–59 form a DNA-binding region, H-T-H motif; the sequence is QYYRLFKSLVEENVTRTNSQLISEKIGVDAATIRRDFSLF. 94-99 provides a ligand contact to NAD(+); that stretch reads GVGNLG.

Belongs to the transcriptional regulatory Rex family. Homodimer.

The protein localises to the cytoplasm. Functionally, modulates transcription in response to changes in cellular NADH/NAD(+) redox state. This is Redox-sensing transcriptional repressor Rex from Lactococcus lactis subsp. cremoris (Streptococcus cremoris).